We begin with the raw amino-acid sequence, 135 residues long: Membrane-anchored ubiquitin-fold protein 4 (135 aa).

Positions Met-1–Asp-20 are disordered. The 70-residue stretch at Val-23–Ala-92 folds into the Ubiquitin-like domain. The residue at position 132 (Cys-132) is a Cysteine methyl ester. A lipid anchor (S-geranylgeranyl cysteine) is attached at Cys-132. The propeptide at Thr-133–Leu-135 is removed in mature form.

The protein resides in the cell membrane. May serve as docking site to facilitate the association of other proteins to the plasma membrane. The protein is Membrane-anchored ubiquitin-fold protein 4 (MUB4) of Oryza sativa subsp. japonica (Rice).